Consider the following 310-residue polypeptide: Tetrahydromethanopterin S-methyltransferase subunit H (310 aa).

The protein belongs to the MtrH family. In terms of assembly, the complex is composed of 8 subunits; MtrA, MtrB, MtrC, MtrD, MtrE, MtrF, MtrG and MtrH.

It carries out the reaction 5-methyl-5,6,7,8-tetrahydromethanopterin + coenzyme M + 2 Na(+)(in) = 5,6,7,8-tetrahydromethanopterin + methyl-coenzyme M + 2 Na(+)(out). It functions in the pathway one-carbon metabolism; methanogenesis from CO(2); methyl-coenzyme M from 5,10-methylene-5,6,7,8-tetrahydromethanopterin: step 2/2. Its function is as follows. Part of a complex that catalyzes the formation of methyl-coenzyme M and tetrahydromethanopterin from coenzyme M and methyl-tetrahydromethanopterin. This is an energy-conserving, sodium-ion translocating step. MtrH catalyzes the transfer of the methyl group from methyl-tetrahydromethanopterin to the corrinoid prosthetic group of MtrA. In Methanothermobacter thermautotrophicus (strain ATCC 29096 / DSM 1053 / JCM 10044 / NBRC 100330 / Delta H) (Methanobacterium thermoautotrophicum), this protein is Tetrahydromethanopterin S-methyltransferase subunit H.